Consider the following 367-residue polypeptide: Glutamate 5-kinase (367 aa).

Lys-10 is a binding site for ATP. The substrate site is built by Ser-50, Asp-137, and Asn-149. ATP-binding positions include 169-170 and 211-217; these read TD and TGGMATK. The PUA domain occupies 275 to 353; the sequence is AGELVVDDGA…QQIGEILGYE (79 aa).

It belongs to the glutamate 5-kinase family.

The protein resides in the cytoplasm. It catalyses the reaction L-glutamate + ATP = L-glutamyl 5-phosphate + ADP. Its pathway is amino-acid biosynthesis; L-proline biosynthesis; L-glutamate 5-semialdehyde from L-glutamate: step 1/2. Catalyzes the transfer of a phosphate group to glutamate to form L-glutamate 5-phosphate. This chain is Glutamate 5-kinase, found in Erwinia tasmaniensis (strain DSM 17950 / CFBP 7177 / CIP 109463 / NCPPB 4357 / Et1/99).